Here is a 648-residue protein sequence, read N- to C-terminus: Penicillin-binding protein PbpB (648 aa).

Residues 1-35 are disordered; sequence MSRRGDRPRTPAQPRKKARVDQPRSARTRRTRVSE. The helical transmembrane segment at 52-72 threads the bilayer; the sequence is GNLAILAVLVIAAVQLFMLQV. Residue S355 is the Acyl-ester intermediate of the active site.

It belongs to the transpeptidase family. Interacts with Wag31.

It is found in the cell membrane. The chain is Penicillin-binding protein PbpB (pbpB) from Mycolicibacterium smegmatis (strain ATCC 700084 / mc(2)155) (Mycobacterium smegmatis).